We begin with the raw amino-acid sequence, 362 residues long: Flotillin-like protein FloA 2 (362 aa).

The chain crosses the membrane as a helical span at residues 24-44 (TALLIGALVIFAGIVVVLFIF).

The protein belongs to the flotillin-like FloA family. Homooligomerizes.

The protein localises to the cell membrane. It is found in the membrane raft. In terms of biological role, found in functional membrane microdomains (FMM) that may be equivalent to eukaryotic membrane rafts. FMMs are highly dynamic and increase in number as cells age. Flotillins are thought to be important factors in membrane fluidity. The sequence is that of Flotillin-like protein FloA 2 from Rhodopirellula baltica (strain DSM 10527 / NCIMB 13988 / SH1).